The sequence spans 434 residues: Glutamine synthetase leaf isozyme, chloroplastic (434 aa).

Disordered stretches follow at residues 1 to 33 and 101 to 126; these read MQVR…ARQP and TISK…GQAP. The transit peptide at 1-54 directs the protein to the chloroplast; it reads MQVRRDDDGAGGCAGDAVPGGGEGQDGVPARQPAGRVWGVSRAARATSGFKVLA. A compositionally biased stretch (gly residues) spans 10–25; that stretch reads AGGCAGDAVPGGGEGQ. Positions 81–161 constitute a GS beta-grasp domain; it reads IIAEYIWVGG…VICDTYTPQG (81 aa). A GS catalytic domain is found at 168-434; the sequence is KRHMAAQIFS…LAAKKLALKV (267 aa).

The protein belongs to the glutamine synthetase family. As to quaternary structure, homooctamer.

It is found in the plastid. Its subcellular location is the chloroplast. The catalysed reaction is L-glutamate + NH4(+) + ATP = L-glutamine + ADP + phosphate + H(+). Its function is as follows. The light-modulated chloroplast enzyme, encoded by a nuclear gene and expressed primarily in leaves, is responsible for the reassimilation of the ammonia generated by photorespiration. The sequence is that of Glutamine synthetase leaf isozyme, chloroplastic from Hordeum vulgare (Barley).